We begin with the raw amino-acid sequence, 89 residues long: MSVDAETKTKIIKDNARDKNDTGSPEVQVAILTTRIKNLTEHFKDHHKDNHSRRGLLQMVNKRRSLLAYLKKKDVERYNALIQKLGLRK.

Residues 1–21 (MSVDAETKTKIIKDNARDKND) show a composition bias toward basic and acidic residues. The disordered stretch occupies residues 1–26 (MSVDAETKTKIIKDNARDKNDTGSPE).

It belongs to the universal ribosomal protein uS15 family. In terms of assembly, part of the 30S ribosomal subunit. Forms a bridge to the 50S subunit in the 70S ribosome, contacting the 23S rRNA.

Functionally, one of the primary rRNA binding proteins, it binds directly to 16S rRNA where it helps nucleate assembly of the platform of the 30S subunit by binding and bridging several RNA helices of the 16S rRNA. Forms an intersubunit bridge (bridge B4) with the 23S rRNA of the 50S subunit in the ribosome. The protein is Small ribosomal subunit protein uS15 of Erythrobacter litoralis (strain HTCC2594).